Consider the following 357-residue polypeptide: Aminomethyltransferase (357 aa).

Belongs to the GcvT family. As to quaternary structure, the glycine cleavage system is composed of four proteins: P, T, L and H.

It carries out the reaction N(6)-[(R)-S(8)-aminomethyldihydrolipoyl]-L-lysyl-[protein] + (6S)-5,6,7,8-tetrahydrofolate = N(6)-[(R)-dihydrolipoyl]-L-lysyl-[protein] + (6R)-5,10-methylene-5,6,7,8-tetrahydrofolate + NH4(+). The glycine cleavage system catalyzes the degradation of glycine. In Halothermothrix orenii (strain H 168 / OCM 544 / DSM 9562), this protein is Aminomethyltransferase.